The following is a 281-amino-acid chain: Arabinose operon regulatory protein (281 aa).

Residues proline 8, threonine 24, arginine 38, tyrosine 82, and histidine 93 each contribute to the alpha-L-arabinopyanose site. Residues arginine 180–glycine 279 form the HTH araC/xylS-type domain. 2 consecutive DNA-binding regions (H-T-H motif) follow at residues alanine 198–leucine 219 and isoleucine 246–threonine 269.

As to quaternary structure, homodimer.

It localises to the cytoplasm. Transcription factor that regulates the expression of several genes involved in the transport and metabolism of L-arabinose. The protein is Arabinose operon regulatory protein of Salmonella typhimurium (strain LT2 / SGSC1412 / ATCC 700720).